A 137-amino-acid polypeptide reads, in one-letter code: Large ribosomal subunit protein uL16 (137 aa).

Basic residues predominate over residues 1–17 (MLSPKRVKFRKRQRGRL). The interval 1–24 (MLSPKRVKFRKRQRGRLKGTDERG) is disordered.

It belongs to the universal ribosomal protein uL16 family. In terms of assembly, part of the 50S ribosomal subunit.

Its function is as follows. Binds 23S rRNA and is also seen to make contacts with the A and possibly P site tRNAs. In Leptospira borgpetersenii serovar Hardjo-bovis (strain JB197), this protein is Large ribosomal subunit protein uL16.